Here is a 380-residue protein sequence, read N- to C-terminus: Alcohol dehydrogenase (380 aa).

Zn(2+)-binding residues include Cys48, Thr50, His70, Cys100, Cys103, Cys106, Cys114, and Cys178. 2 residues coordinate an alcohol: Thr50 and His70. Position 50 (Thr50) interacts with NAD(+). Residues Gly203–Gly208, Asp227, Arg232, Thr273, Val296, Val296–Val298, Phe323, and Arg373 each bind NAD(+).

Belongs to the zinc-containing alcohol dehydrogenase family. As to quaternary structure, homodimer. Requires Zn(2+) as cofactor.

It is found in the cytoplasm. It carries out the reaction a primary alcohol + NAD(+) = an aldehyde + NADH + H(+). It catalyses the reaction a secondary alcohol + NAD(+) = a ketone + NADH + H(+). The protein is Alcohol dehydrogenase (ADH) of Malus domestica (Apple).